The primary structure comprises 589 residues: ATP-dependent lipid A-core flippase (589 aa).

Helical transmembrane passes span 23–43 (WPIF…DAGF), 60–80 (LVFI…RGAA), 153–173 (VGLL…FLVI), 249–269 (VGTS…LFFA), and 272–292 (PSFH…IMML). Residues 27–307 (LIGVVGMIAV…LTMVNSYIQK (281 aa)) enclose the ABC transmembrane type-1 domain. Positions 339–575 (IEYQGVSFAY…NGAYAELYRM (237 aa)) constitute an ABC transporter domain. 373 to 380 (GRSGAGKS) is a binding site for ATP.

It belongs to the ABC transporter superfamily. Lipid exporter (TC 3.A.1.106) family. In terms of assembly, homodimer.

The protein resides in the cell inner membrane. The enzyme catalyses ATP + H2O + lipid A-core oligosaccharideSide 1 = ADP + phosphate + lipid A-core oligosaccharideSide 2.. Involved in lipopolysaccharide (LPS) biosynthesis. Translocates lipid A-core from the inner to the outer leaflet of the inner membrane. Transmembrane domains (TMD) form a pore in the inner membrane and the ATP-binding domain (NBD) is responsible for energy generation. This Coxiella burnetii (strain RSA 493 / Nine Mile phase I) protein is ATP-dependent lipid A-core flippase.